The chain runs to 232 residues: ATP-dependent Clp protease proteolytic subunit 2 (232 aa).

Ser-124 functions as the Nucleophile in the catalytic mechanism. The active site involves His-149.

It belongs to the peptidase S14 family. As to quaternary structure, fourteen ClpP subunits assemble into 2 heptameric rings which stack back to back to give a disk-like structure with a central cavity, resembling the structure of eukaryotic proteasomes.

It localises to the cytoplasm. The catalysed reaction is Hydrolysis of proteins to small peptides in the presence of ATP and magnesium. alpha-casein is the usual test substrate. In the absence of ATP, only oligopeptides shorter than five residues are hydrolyzed (such as succinyl-Leu-Tyr-|-NHMec, and Leu-Tyr-Leu-|-Tyr-Trp, in which cleavage of the -Tyr-|-Leu- and -Tyr-|-Trp bonds also occurs).. Cleaves peptides in various proteins in a process that requires ATP hydrolysis. Has a chymotrypsin-like activity. Plays a major role in the degradation of misfolded proteins. This Nostoc sp. (strain PCC 7120 / SAG 25.82 / UTEX 2576) protein is ATP-dependent Clp protease proteolytic subunit 2.